The sequence spans 127 residues: MAKEVIFTEKAPKPIGPYSQAIKVGNFIFVAGQIPIDPETGEIVKGDIKEQTKRVIENIKAILEEAGASLNDVVKVTVYLKDLNDFAKMNEVYSEYFGESKPARVAVEVSRLPKDVLIEMEAIAYKE.

The protein belongs to the RutC family.

The chain is RutC family protein PYRAB12510 from Pyrococcus abyssi (strain GE5 / Orsay).